Here is a 953-residue protein sequence, read N- to C-terminus: Isoleucine--tRNA ligase (953 aa).

Residues 57–67 (PYANGDIHIGH) carry the 'HIGH' region motif. An L-isoleucyl-5'-AMP-binding site is contributed by Glu582. Positions 623 to 627 (KMSKS) match the 'KMSKS' region motif. Lys626 serves as a coordination point for ATP. Residues Cys916, Cys919, Cys936, and Cys939 each contribute to the Zn(2+) site.

It belongs to the class-I aminoacyl-tRNA synthetase family. IleS type 1 subfamily. In terms of assembly, monomer. Zn(2+) serves as cofactor.

Its subcellular location is the cytoplasm. The enzyme catalyses tRNA(Ile) + L-isoleucine + ATP = L-isoleucyl-tRNA(Ile) + AMP + diphosphate. In terms of biological role, catalyzes the attachment of isoleucine to tRNA(Ile). As IleRS can inadvertently accommodate and process structurally similar amino acids such as valine, to avoid such errors it has two additional distinct tRNA(Ile)-dependent editing activities. One activity is designated as 'pretransfer' editing and involves the hydrolysis of activated Val-AMP. The other activity is designated 'posttransfer' editing and involves deacylation of mischarged Val-tRNA(Ile). The chain is Isoleucine--tRNA ligase from Bordetella parapertussis (strain 12822 / ATCC BAA-587 / NCTC 13253).